The primary structure comprises 217 residues: GTP cyclohydrolase 1 (217 aa).

Zn(2+) contacts are provided by Cys109, His112, and Cys180.

Belongs to the GTP cyclohydrolase I family. In terms of assembly, toroid-shaped homodecamer, composed of two pentamers of five dimers.

It carries out the reaction GTP + H2O = 7,8-dihydroneopterin 3'-triphosphate + formate + H(+). Its pathway is cofactor biosynthesis; 7,8-dihydroneopterin triphosphate biosynthesis; 7,8-dihydroneopterin triphosphate from GTP: step 1/1. The protein is GTP cyclohydrolase 1 of Photobacterium profundum (strain SS9).